The following is a 226-amino-acid chain: Cytidylate kinase (226 aa).

Gly11 to Thr19 contributes to the ATP binding site.

It belongs to the cytidylate kinase family. Type 1 subfamily.

The protein localises to the cytoplasm. It carries out the reaction CMP + ATP = CDP + ADP. It catalyses the reaction dCMP + ATP = dCDP + ADP. The sequence is that of Cytidylate kinase from Bacillus licheniformis (strain ATCC 14580 / DSM 13 / JCM 2505 / CCUG 7422 / NBRC 12200 / NCIMB 9375 / NCTC 10341 / NRRL NRS-1264 / Gibson 46).